The following is a 458-amino-acid chain: tRNA modification GTPase MnmE (458 aa).

Residues Arg28, Glu85, and Lys124 each coordinate (6S)-5-formyl-5,6,7,8-tetrahydrofolate. A TrmE-type G domain is found at 220–381 (GMNVVIAGRP…LKEHLKAVMG (162 aa)). Residue Asn230 coordinates K(+). GTP-binding positions include 230–235 (NAGKSS), 249–255 (TDIEGTT), and 274–277 (DTAG). Residue Ser234 coordinates Mg(2+). Thr249, Ile251, and Thr254 together coordinate K(+). A Mg(2+)-binding site is contributed by Thr255. A (6S)-5-formyl-5,6,7,8-tetrahydrofolate-binding site is contributed by Lys458.

The protein belongs to the TRAFAC class TrmE-Era-EngA-EngB-Septin-like GTPase superfamily. TrmE GTPase family. As to quaternary structure, homodimer. Heterotetramer of two MnmE and two MnmG subunits. K(+) is required as a cofactor.

It localises to the cytoplasm. Exhibits a very high intrinsic GTPase hydrolysis rate. Involved in the addition of a carboxymethylaminomethyl (cmnm) group at the wobble position (U34) of certain tRNAs, forming tRNA-cmnm(5)s(2)U34. The chain is tRNA modification GTPase MnmE from Chromohalobacter salexigens (strain ATCC BAA-138 / DSM 3043 / CIP 106854 / NCIMB 13768 / 1H11).